We begin with the raw amino-acid sequence, 139 residues long: Maximins 4/H3 type 7 (139 aa).

Residues 1 to 18 (MNFKYIVAVSFLIASAYA) form the signal peptide. Residues 19–43 (RSVQNDEQSLSQRDVLEEESLREIR) constitute a propeptide that is removed on maturation. At asparagine 70 the chain carries Asparagine amide. A propeptide spanning residues 74–118 (TAEDHEVMKRLEAIMRDLDSLDYPEEASERETRGFNQDEIAKEKR) is cleaved from the precursor. Isoleucine 138 carries the isoleucine amide modification.

It belongs to the bombinin family. As to expression, expressed by the skin glands.

It is found in the secreted. Maximin-4 shows antibacterial activity against both Gram-positive and Gram-negative bacteria. It also shows antimicrobial activity against the fungus C.albicans, but not against A.flavus nor P.uticale. It has little hemolytic activity. It does not possess a significant cytotoxicity against tumor cell lines. It does not possess a significant anti-HIV activity. Its function is as follows. Maximin-H3 shows antibacterial activity against both Gram-positive and Gram-negative bacteria. It also shows antimicrobial activity against the fungus C.albicans. Shows strong hemolytic activity. The chain is Maximins 4/H3 type 7 from Bombina maxima (Giant fire-bellied toad).